Reading from the N-terminus, the 550-residue chain is Invertase (550 aa).

Residues 1 to 22 (MIQLSPLLLLPLFSVFNSIADA) form the signal peptide. Substrate-binding positions include 39–42 (WMND), Gln-60, and 103–104 (FS). Asp-42 is an active-site residue. Asn-112, Asn-113, Asn-119, and Asn-165 each carry an N-linked (GlcNAc...) asparagine glycan. 170–171 (RD) contacts substrate. N-linked (GlcNAc...) asparagine glycosylation occurs at Asn-211. Substrate is bound at residue Glu-223. N-linked (GlcNAc...) asparagine glycosylation is present at Asn-237. Residue Trp-313 participates in substrate binding. Residues Asn-333, Asn-364, Asn-398, and Asn-420 are each glycosylated (N-linked (GlcNAc...) asparagine).

The protein belongs to the glycosyl hydrolase 32 family.

The enzyme catalyses Hydrolysis of terminal non-reducing beta-D-fructofuranoside residues in beta-D-fructofuranosides.. The protein is Invertase (INV1) of Wickerhamomyces anomalus (Yeast).